The sequence spans 311 residues: uncharacterized protein (311 aa).

This is an uncharacterized protein from Bacillus subtilis (strain 168).